The following is a 374-amino-acid chain: 5-aminosalicylate 1,2-dioxygenase (374 aa).

The protein belongs to the gentisate 1,2-dioxygenase family. Fe(2+) serves as cofactor.

It catalyses the reaction 5-amino-2-hydroxybenzoate + O2 = (2Z,4E)-4-amino-6-oxohepta-2,4-dienedioate + H(+). Inhibited by SDS and o-phenanthroline, a ferrous iron chelator. Partially inhibited by EDTA. In terms of biological role, involved in the biodegradation of 3-aminobenzoate. Catalyzes the cleavage of the 5-aminosalicylate (5ASA) aromatic ring to form 4-amino-6-oxohepta-2,4-dienedioate (cis-ACOHDA). Can also convert gentisate, but the catalytic efficiency with 5ASA is 70-fold higher. In Comamonas sp, this protein is 5-aminosalicylate 1,2-dioxygenase.